Consider the following 54-residue polypeptide: uncharacterized protein (54 aa).

Residues 34-54 (NNREKQKSGKLRELRRGFKTF) form a disordered region.

This is an uncharacterized protein from Acidianus two-tailed virus (ATV).